The following is a 469-amino-acid chain: Septin homolog spn1 (469 aa).

A disordered region spans residues 1-58; the sequence is MASMVLADGMPTVKDDSTRSRGSDVDSFTSTDNVTQINVEAAISENKNEEKPIQDNSE. A compositionally biased stretch (basic and acidic residues) spans 13-24; it reads VKDDSTRSRGSD. Over residues 26–38 the composition is skewed to polar residues; it reads DSFTSTDNVTQIN. The region spanning 92-367 is the Septin-type G domain; sequence QGFNFNVLVL…EAYRTERLLS (276 aa). The interval 102-109 is G1 motif; it reads GESGSGKS. GTP contacts are provided by residues 102-109, threonine 139, glycine 165, 244-252, and arginine 317; these read GESGSGKS and KADTLTDDE. Positions 162-165 are G3 motif; it reads DTPG. A G4 motif region spans residues 243 to 246; sequence AKAD. Residues 383–469 adopt a coiled-coil conformation; it reads SAKLEEERAL…NEKSKRKFFK (87 aa).

This sequence belongs to the TRAFAC class TrmE-Era-EngA-EngB-Septin-like GTPase superfamily. Septin GTPase family. In terms of assembly, component of the septin complex composed of two copies of each spn1, spn2, spn3 and spn4.

Its subcellular location is the cytoplasm. It is found in the cell cortex. In terms of biological role, plays a role in the cell cycle. Involved in a late stage of septum formation leading to the separation of the daughter cells. The protein is Septin homolog spn1 (spn1) of Schizosaccharomyces pombe (strain 972 / ATCC 24843) (Fission yeast).